The primary structure comprises 495 residues: Homeobox protein ceh-21 (495 aa).

The segment covering 1-14 (MSQQFQASSGTGSA) has biased composition (polar residues). 2 disordered regions span residues 1–24 (MSQQ…TEHE) and 89–267 (TAES…PGGE). The segment covering 106–120 (LEEKSDKSSDGDGTS) has biased composition (basic and acidic residues). Over residues 132–145 (NETEEDHEEKEDEA) the composition is skewed to acidic residues. A compositionally biased stretch (basic and acidic residues) spans 149–162 (SRRESTRLKRKLLE). 2 stretches are compositionally biased toward polar residues: residues 163–179 (SQKT…ASSK) and 199–217 (TPEQ…TVRA). Over residues 218–233 (SSTCGSSVSSTSTVSS) the composition is skewed to low complexity. Residues 242–254 (RATETPKLEELAP) show a composition bias toward basic and acidic residues. Positions 284-370 (NAQIGDDEEL…VRRALCFLPK (87 aa)) form a DNA-binding region, CUT. The segment at residues 389 to 449 (KTVKVIRLTF…MNSRRRLRID (61 aa)) is a DNA-binding region (homeobox). The segment at 450–473 (QQISRSSRSTGNGADTEDELDEED) is disordered. Over residues 464 to 473 (DTEDELDEED) the composition is skewed to acidic residues.

Belongs to the CUT homeobox family.

It is found in the nucleus. Probable DNA-binding regulatory protein involved in cell-fate specification. The sequence is that of Homeobox protein ceh-21 (ceh-21) from Caenorhabditis elegans.